A 41-amino-acid chain; its full sequence is Ornatin-A2 (41 aa).

The Cell attachment site signature appears at 33–35; that stretch reads RGD.

It belongs to the ornatin family.

The protein localises to the secreted. Functionally, potent inhibitor of fibrinogen interaction with platelet receptors expressed on glycoprotein IIb-IIIa complex. May prevent blood from clotting during either feeding and/or storage of ingested blood. This Placobdella ornata (Turtle leech) protein is Ornatin-A2.